The following is a 427-amino-acid chain: Glutamate-1-semialdehyde 2,1-aminomutase (427 aa).

K265 carries the N6-(pyridoxal phosphate)lysine modification.

This sequence belongs to the class-III pyridoxal-phosphate-dependent aminotransferase family. HemL subfamily. As to quaternary structure, homodimer. Pyridoxal 5'-phosphate is required as a cofactor.

The protein resides in the cytoplasm. It catalyses the reaction (S)-4-amino-5-oxopentanoate = 5-aminolevulinate. Its pathway is porphyrin-containing compound metabolism; protoporphyrin-IX biosynthesis; 5-aminolevulinate from L-glutamyl-tRNA(Glu): step 2/2. The polypeptide is Glutamate-1-semialdehyde 2,1-aminomutase (Neisseria meningitidis serogroup C (strain 053442)).